A 275-amino-acid polypeptide reads, in one-letter code: 2-C-methyl-D-erythritol 4-phosphate cytidylyltransferase (275 aa).

It belongs to the IspD/TarI cytidylyltransferase family. IspD subfamily.

It carries out the reaction 2-C-methyl-D-erythritol 4-phosphate + CTP + H(+) = 4-CDP-2-C-methyl-D-erythritol + diphosphate. It participates in isoprenoid biosynthesis; isopentenyl diphosphate biosynthesis via DXP pathway; isopentenyl diphosphate from 1-deoxy-D-xylulose 5-phosphate: step 2/6. Its function is as follows. Catalyzes the formation of 4-diphosphocytidyl-2-C-methyl-D-erythritol from CTP and 2-C-methyl-D-erythritol 4-phosphate (MEP). This is 2-C-methyl-D-erythritol 4-phosphate cytidylyltransferase from Corynebacterium jeikeium (strain K411).